The sequence spans 236 residues: Small ribosomal subunit protein uS2c (236 aa).

It belongs to the universal ribosomal protein uS2 family.

The protein localises to the plastid. It is found in the chloroplast. In Populus alba (White poplar), this protein is Small ribosomal subunit protein uS2c (rps2).